The following is a 446-amino-acid chain: Glycerol-3-phosphate acyltransferase 3 (446 aa).

A run of 3 helical transmembrane segments spans residues Leu-25–Lys-45, Leu-142–Leu-162, and Phe-164–Leu-184. The short motif at His-232–Asp-237 is the HXXXXD motif element. Residues Ile-352–Met-372 form a helical membrane-spanning segment. The tract at residues Phe-418–Asp-446 is disordered.

This sequence belongs to the 1-acyl-sn-glycerol-3-phosphate acyltransferase family.

It is found in the endoplasmic reticulum membrane. It catalyses the reaction sn-glycerol 3-phosphate + an acyl-CoA = a 1-acyl-sn-glycero-3-phosphate + CoA. It carries out the reaction a 1-acyl-sn-glycero-3-phosphate + an acyl-CoA = a 1,2-diacyl-sn-glycero-3-phosphate + CoA. The enzyme catalyses dodecanoyl-CoA + sn-glycerol 3-phosphate = 1-dodecanoyl-sn-glycerol 3-phosphate + CoA. The catalysed reaction is sn-glycerol 3-phosphate + hexadecanoyl-CoA = 1-hexadecanoyl-sn-glycero-3-phosphate + CoA. It catalyses the reaction sn-glycerol 3-phosphate + (9Z)-octadecenoyl-CoA = 1-(9Z-octadecenoyl)-sn-glycero-3-phosphate + CoA. It carries out the reaction (9Z,12Z)-octadecadienoyl-CoA + sn-glycerol 3-phosphate = 1-(9Z,12Z)-octadecadienoyl-sn-glycero-3-phosphate + CoA. The enzyme catalyses 1-tetradecanoyl-sn-glycerol 3-phosphate + (9Z)-octadecenoyl-CoA = 1-tetradecanoyl-2-(9Z)-octadecenoyl-sn-glycero-3-phosphate + CoA. The catalysed reaction is 1-hexadecanoyl-sn-glycero-3-phosphate + (9Z)-octadecenoyl-CoA = 1-hexadecanoyl-2-(9Z-octadecenoyl)-sn-glycero-3-phosphate + CoA. It catalyses the reaction 1-(9Z-octadecenoyl)-sn-glycero-3-phosphate + (9Z)-octadecenoyl-CoA = 1,2-di-(9Z-octadecenoyl)-sn-glycero-3-phosphate + CoA. It carries out the reaction 1-(6Z,9Z,12Z-octadecatrienoyl)-sn-glycero-3-phosphate + (9Z)-octadecenoyl-CoA = (6Z,9Z,12Z)-octadecatrienoyl-2-(9Z)-octadecenoyl-sn-glycero-3-phosphate + CoA. The enzyme catalyses 1-(9Z,12Z,15Z)-octadecatrienoyl-sn-glycero-3-phosphate + (9Z)-octadecenoyl-CoA = 1-(9Z,12Z,15Z)-octadecatrienoyl-2-(9Z)-octadecenoyl-sn-glycero-3-phosphate + CoA. The catalysed reaction is 1-(9Z-octadecenoyl)-sn-glycero-3-phosphate + tetradecanoyl-CoA = 1-(9Z)-octadecenoyl-2-tetradecanoyl-sn-glycero-3-phosphate + CoA. It catalyses the reaction 1-(9Z-octadecenoyl)-sn-glycero-3-phosphate + hexadecanoyl-CoA = 1-(9Z)-octadecenoyl-2-hexadecanoyl-sn-glycero-3-phosphate + CoA. It carries out the reaction 1-(9Z-octadecenoyl)-sn-glycero-3-phosphate + octadecanoyl-CoA = 1-(9Z-octadecenoyl)-2-octadecanoyl-sn-glycero-3-phosphate + CoA. The enzyme catalyses 1-(9Z-octadecenoyl)-sn-glycero-3-phosphate + (9Z,12Z)-octadecadienoyl-CoA = 1-(9Z)-octadecenoyl-2-(9Z,12Z)-octadecadienoyl-sn-glycero-3-phosphate + CoA. The catalysed reaction is 1-(5Z,8Z,11Z,14Z-eicosatetraenoyl)-sn-glycero-3-phosphate + (9Z)-octadecenoyl-CoA = 1-(5Z,8Z,11Z,14Z)-eicosatetraenoyl-2-(9Z)-octadecenoyl-sn-glycero-3-phosphate + CoA. Its pathway is glycerolipid metabolism; triacylglycerol biosynthesis. It participates in phospholipid metabolism; CDP-diacylglycerol biosynthesis; CDP-diacylglycerol from sn-glycerol 3-phosphate: step 1/3. In terms of biological role, converts glycerol-3-phosphate to 1-acyl-sn-glycerol-3-phosphate (lysophosphatidic acid or LPA) by incorporating an acyl moiety at the sn-1 position of the glycerol backbone. Also converts LPA into 1,2-diacyl-sn-glycerol-3-phosphate (phosphatidic acid or PA) by incorporating an acyl moiety at the sn-2 position of the glycerol backbone. Protects cells against lipotoxicity. The chain is Glycerol-3-phosphate acyltransferase 3 from Gallus gallus (Chicken).